A 292-amino-acid chain; its full sequence is Pyridoxal 5'-phosphate synthase subunit PdxS (292 aa).

Residue Asp22 coordinates D-ribose 5-phosphate. Lys79 acts as the Schiff-base intermediate with D-ribose 5-phosphate in catalysis. Residue Gly151 coordinates D-ribose 5-phosphate. Arg163 serves as a coordination point for D-glyceraldehyde 3-phosphate. Residues Gly212 and 233–234 (GS) contribute to the D-ribose 5-phosphate site.

This sequence belongs to the PdxS/SNZ family. In terms of assembly, in the presence of PdxT, forms a dodecamer of heterodimers.

It carries out the reaction aldehydo-D-ribose 5-phosphate + D-glyceraldehyde 3-phosphate + L-glutamine = pyridoxal 5'-phosphate + L-glutamate + phosphate + 3 H2O + H(+). It functions in the pathway cofactor biosynthesis; pyridoxal 5'-phosphate biosynthesis. Catalyzes the formation of pyridoxal 5'-phosphate from ribose 5-phosphate (RBP), glyceraldehyde 3-phosphate (G3P) and ammonia. The ammonia is provided by the PdxT subunit. Can also use ribulose 5-phosphate and dihydroxyacetone phosphate as substrates, resulting from enzyme-catalyzed isomerization of RBP and G3P, respectively. The chain is Pyridoxal 5'-phosphate synthase subunit PdxS from Caldanaerobacter subterraneus subsp. tengcongensis (strain DSM 15242 / JCM 11007 / NBRC 100824 / MB4) (Thermoanaerobacter tengcongensis).